Here is a 258-residue protein sequence, read N- to C-terminus: Short-chain dehydrogenase/reductase olcF (258 aa).

NADP(+) is bound by residues valine 12, aspartate 58, and arginine 120. Residue serine 138 is the Proton donor of the active site. 3 residues coordinate NADP(+): tyrosine 152, lysine 156, and valine 185. Tyrosine 152 acts as the Proton acceptor in catalysis. Lysine 156 acts as the Lowers pKa of active site Tyr in catalysis.

It belongs to the short-chain dehydrogenases/reductases (SDR) family.

It functions in the pathway secondary metabolite biosynthesis; terpenoid biosynthesis. Functionally, short-chain dehydrogenase/reductase; part of the gene cluster that mediates the biosynthesis of 15-deoxyoxalicine B. The first step of the pathway is the synthesis of nicotinyl-CoA from nicotinic acid by the nicotinic acid-CoA ligase olcI. Nicotinyl-CoA is then a substrate of polyketide synthase olcA to produce 4-hydroxy-6-(3-pyridinyl)-2H-pyran-2-one (HPPO) which is further prenylated by the polyprenyl transferase olcH to yield geranylgeranyl-HPPO. Geranylgeranyl pyrophosphate is provided by the cluster-specific geranylgeranyl pyrophosphate synthase olcC. The FAD-dependent monooxygenase olcE catalyzes the epoxidation of geranylgeranyl-HPPO and the terpene cyclase olcD catalyzes the cyclization of the terpenoid component, resulting in the formation of the tricyclic terpene moiety seen in predecaturin E. The cytochrome P450 monooxygenase then catalyzes the allylic oxidation of predecaturin E, which is followed by spirocylization with concomitant loss of one molecule of water to form decaturin E. Decaturin E is the substrate of the cytochrome P450 monooxygenase olcJ which hydroxylates it at the C-29 position to form decaturin F. The short-chain dehydrogenase/reductase olcF may catalyze the oxidation of decaturin F to generate the 29-hydroxyl-27-one intermediate, and subsequent hemiacetal formation probably leads to the formation of decaturin C. The dioxygenase olcK may be a peroxisomal enzyme that catalyzes the hydroxylation of decaturin C into decaturin A once decaturin C is shuttled into the peroxisome by the MFS transporter olcL. Finally the cytochrome P450 monooxygenase olcB catalyzes the oxidative rearrangement to yield 15-deoxyoxalicine B. In the absence of olcJ, decaturin E may be shunted to a pathway in which it is oxidized to a ketone, possibly by olcF, to form decaturin D, which undergoes further allylic oxidation to yield decaturin G. Moreover, in the absence of oclK or oclL, oclB can convert decaturin C into 15-deoxyoxalicine A. This is Short-chain dehydrogenase/reductase olcF from Penicillium canescens.